The primary structure comprises 106 residues: Urease subunit beta (106 aa).

This sequence belongs to the urease beta subunit family. In terms of assembly, heterotrimer of UreA (gamma), UreB (beta) and UreC (alpha) subunits. Three heterotrimers associate to form the active enzyme.

It is found in the cytoplasm. The enzyme catalyses urea + 2 H2O + H(+) = hydrogencarbonate + 2 NH4(+). The protein operates within nitrogen metabolism; urea degradation; CO(2) and NH(3) from urea (urease route): step 1/1. This Escherichia coli O157:H7 protein is Urease subunit beta.